The sequence spans 283 residues: MEIKFKKMHGTGNDFIMIYYEDYPFEQHFNQLAKEVCHRHFGIGADGLMIVKESSVADVQMKYFNSDGSEAGMCGNGIRCFAKFVYDEGLVKKEIFTVETLSGVKELQVATVEEKVSSVRVNMGKMVLDPKQIPVNSEGLQFINEQLMIDGEKYTISTVLLGVPHTIIFMETLDLDRVKRVGKIIENHQLFPENTNVNFAQIINQNTIRVRTWERGAGYTLACGTGVSSVCGIANHLSLVGPNVVVEIEGGKLDIEIAPEGDIYMEGPAKDICKGVYLNSLIK.

Substrate-binding residues include Asn13 and Asn65. Cys74 serves as the catalytic Proton donor. Residues 75–76 (GN), Asn196, and 214–215 (ER) contribute to the substrate site. The Proton acceptor role is filled by Cys223. 224–225 (GT) contributes to the substrate binding site.

Belongs to the diaminopimelate epimerase family. Homodimer.

It localises to the cytoplasm. It catalyses the reaction (2S,6S)-2,6-diaminopimelate = meso-2,6-diaminopimelate. It functions in the pathway amino-acid biosynthesis; L-lysine biosynthesis via DAP pathway; DL-2,6-diaminopimelate from LL-2,6-diaminopimelate: step 1/1. In terms of biological role, catalyzes the stereoinversion of LL-2,6-diaminopimelate (L,L-DAP) to meso-diaminopimelate (meso-DAP), a precursor of L-lysine and an essential component of the bacterial peptidoglycan. The chain is Diaminopimelate epimerase from Alkaliphilus metalliredigens (strain QYMF).